A 555-amino-acid chain; its full sequence is MTHLSDLDIANQSTLQPIKDIAASVGISEDALEPYGHYKAKIDINKITPRDSKGKVVLVTAMSPTPAGEGKSTVTVGLADAFHELKKNVMVALREPALGPTFGIKGGATGGGYAQVLPMEDINLHFNGDFHAITTANNALSAFIDNHIHQGNELGIDQRRIEWKRVLDMNDRALRHVNVGLGGPTNGVPREDGFNITVASEIMAILCLSRSIKDLKDKISRITIGYTRDRKPVTVADLKVQGALAMILKDAIKPNLVQSIEGTPALVHGGPFANIAHGCNSILATETARDLADIVVTEAGFGSDLGAEKFMDIKAREAGFDPAAVVVVATIRALKMHGGVAKDNLKEENVEAVKAGIVNLERHVNNIKKFGVEPVVAINAFIHDTDAEVEYVKSWAKENNVRIALTEVWEKGGKGGVDLANEVLEVIDQPNSFKPLYELELPLEQKIEKIVTEIYGGSKVTFSSKAQKQLKQFKENGWDNYPVCMAKTQYSFSDDQTLLGAPSGFEITIRELEAKTGAGFIVALTGAIMTMPGLPKKPAALNMDVTDDGHAIGLF.

65–72 (TPAGEGKS) serves as a coordination point for ATP.

Belongs to the formate--tetrahydrofolate ligase family.

It carries out the reaction (6S)-5,6,7,8-tetrahydrofolate + formate + ATP = (6R)-10-formyltetrahydrofolate + ADP + phosphate. It functions in the pathway one-carbon metabolism; tetrahydrofolate interconversion. The protein is Formate--tetrahydrofolate ligase of Staphylococcus aureus (strain bovine RF122 / ET3-1).